The sequence spans 182 residues: Probable tryptophan transport protein (182 aa).

4 helical membrane-spanning segments follow: residues 10–32 (ITIN…VLGL), 55–75 (ITMV…KFPG), 119–141 (IVLP…IIVG), and 146–168 (FSIL…GLVL).

It belongs to the vitamin uptake transporter (VUT/ECF) (TC 2.A.88) family. TrpP subfamily.

The protein resides in the cell membrane. Functionally, probably involved in tryptophan uptake. The chain is Probable tryptophan transport protein (trpP) from Clostridium perfringens (strain 13 / Type A).